The sequence spans 336 residues: Ketoreductase adrE (336 aa).

Y171 serves as a coordination point for NADP(+).

The protein belongs to the NAD(P)-dependent epimerase/dehydratase family. Dihydroflavonol-4-reductase subfamily.

It functions in the pathway secondary metabolite biosynthesis; terpenoid biosynthesis. Functionally, ketoreductase; part of the gene cluster that mediates the biosynthesis of andrastins, meroterpenoid compounds that exhibit inhibitory activity against ras farnesyltransferase, suggesting that they could be promising leads for antitumor agents. The first step of the pathway is the synthesis of 3,5-dimethylorsellinic acid (DMOA) by the polyketide synthase adrD via condensation of one acetyl-CoA starter unit with 3 malonyl-CoA units and 2 methylations. DMAO is then converted to farnesyl-DMAO by the prenyltransferase adrG. The methyltransferase adrK catalyzes the methylation of the carboxyl group of farnesyl-DMAO to farnesyl-DMAO methyl ester which is further converted to epoxyfarnesyl-DMAO methyl ester by the FAD-dependent monooxygenase adrH. The terpene cyclase adrI then catalyzes the carbon skeletal rearrangement to generate the andrastin E, the first compound in the pathway having the andrastin scaffold, with the tetracyclic ring system. The post-cyclization tailoring enzymes adrF, adrE, adrJ, and adrA, are involved in the conversion of andrastin E into andrastin A. The short chain dehydrogenase adrF is responsible for the oxidation of the C-3 a hydroxyl group of andrastin E to yield the corresponding ketone, andrastin D. The ketoreductase adrE stereoselectively reduces the carbonyl moiety to reverse the stereochemistry of the C-3 position to yield andrastin F. The acetyltransferase adrJ is the acetyltransferase that attaches the acetyl group to the C-3 hydroxyl group of andrastin F to yield andrastin C. Finally, the cytochrome P450 monooxygenase adrA catalyzes two sequential oxidation reactions of the C-23 methyl group, to generate the corresponding alcohol andrastin B, and aldehyde andrastin A. This Penicillium roqueforti protein is Ketoreductase adrE.